The sequence spans 456 residues: MGALDEGHYHAEIDNEVSFELGFETQPETLVIQDAVRVLLQGLGEDINREGIKKTPFRVAKALRQGTRGYKQKVNDIVHGALFPEAGLEGGSGQAGGVGGLVIVRDLDLFSYCESCLLPFQVKCHVGYVPSGKRVVGLSKLSRVADIFAKRLQSPQRLADEVCTALQHGIKPTGVAVVLQCMHIHFPNFESAFLDSTSQGWVKITATSGSGVFEDGNADVWTDFWSLLKFRGISIDNAHRRSSGQSWCPSQSCGMPGQANSAMTNAVNSILKSLGEDPLREELVETPSRFVKWFMNFRNSNLEMKLNGFVRSRIDTRSPQGGNFNDGICSELNLSFWSQCEHHLLPFQGVVHIGYHSSDGVNPVGRPLVQSVVHFYGFKLQVQERVTRQIAETVSSFLGEDIIVVVEANHTCMISRGIEKFGSNTATFAVLGRFSTDPVARAKFLQSLPDSGSAGR.

3 residues coordinate Zn(2+): cysteine 340, histidine 343, and cysteine 412.

Belongs to the GTP cyclohydrolase I family. In terms of assembly, homodimer. As to expression, expressed in leaves and unripe fruits.

It catalyses the reaction GTP + H2O = 7,8-dihydroneopterin 3'-triphosphate + formate + H(+). Its pathway is cofactor biosynthesis; 7,8-dihydroneopterin triphosphate biosynthesis; 7,8-dihydroneopterin triphosphate from GTP: step 1/1. GTP cyclohydrolase 1 is the first enzyme in the biosynthetic pathway leading to folic acid. The chain is GTP cyclohydrolase 1 (GCH1) from Solanum lycopersicum (Tomato).